We begin with the raw amino-acid sequence, 570 residues long: NADPH oxidase 2 (570 aa).

Residues 2–9 are Cytoplasmic-facing; it reads GNWAVNEG. A helical membrane pass occupies residues 10–36; sequence LSIFVILVWLGLNVFLFINYYKVYDDG. The Extracellular segment spans residues 37-46; it reads PKYNYTRKLL. A glycan (N-linked (GlcNAc...) asparagine) is linked at Asn-40. A helical membrane pass occupies residues 47–72; sequence GSALALARAPAACLNFNCMLILLPVC. The Ferric oxidoreductase domain maps to 54 to 286; sequence RAPAACLNFN…MFLYLCERLV (233 aa). Residues 73 to 95 lie on the Cytoplasmic side of the membrane; it reads RNLLSFLRGSSACCSTRIRRQLD. The helical transmembrane segment at 96–130 threads the bilayer; that stretch reads RNLTFHKMVAWMIALHTAIHTIAHLFNVEWCVNAR. Residues His-101 and His-115 each contribute to the heme b site. Residues 131-163 lie on the Extracellular side of the membrane; it reads VGISDRYSIALSDIGDNENEEYLNFAREKIKNP. Residues Lys-159 and Lys-161 each participate in a glycyl lysine isopeptide (Lys-Gly) (interchain with G-Cter in ubiquitin) cross-link. A helical membrane pass occupies residues 164-194; that stretch reads EGGLYVAVTRLAGITGIVITLCLILIITSST. Over 195–203 the chain is Cytoplasmic; it reads KTIRRSYFE. 2 residues coordinate FAD: Arg-199 and Ser-200. A helical transmembrane segment spans residues 204–222; it reads VFWYTHHLFVIFFIGLAIH. 5 residues coordinate heme b: Trp-206, His-209, His-222, Arg-226, and Ile-227. Topologically, residues 223 to 267 are extracellular; that stretch reads GAERIVRGQTAESLEEHNLDICADKIEEWGKIKECPVPKFAGNPP. Lys-255 participates in a covalent cross-link: Glycyl lysine isopeptide (Lys-Gly) (interchain with G-Cter in ubiquitin). 3 residues coordinate heme b: Met-268, Tyr-280, and Arg-287. A helical membrane pass occupies residues 268–285; sequence MTWKWIVGPMFLYLCERL. At 286–570 the chain is on the cytoplasmic side; sequence VRFWRSQQKV…VHFIFNKENF (285 aa). The FAD-binding FR-type domain maps to 287–397; sequence RFWRSQQKVV…DGPFGTASED (111 aa). Glycyl lysine isopeptide (Lys-Gly) (interchain with G-Cter in ubiquitin) cross-links involve residues Lys-294, Lys-299, Lys-306, Lys-328, and Lys-334. Residues Trp-337, His-338, Pro-339, Thr-341, His-354, Arg-356, Trp-361, and Thr-362 each coordinate FAD. Residue Lys-381 forms a Glycyl lysine isopeptide (Lys-Gly) (interchain with G-Cter in ubiquitin) linkage. NADPH-binding residues include Ile-411, Arg-446, and Thr-481. Lys-506 participates in a covalent cross-link: Glycyl lysine isopeptide (Lys-Gly) (interchain with G-Cter in ubiquitin). An NADPH-binding site is contributed by Arg-513. A Glycyl lysine isopeptide (Lys-Gly) (interchain with G-Cter in ubiquitin) cross-link involves residue Lys-567.

Component of the phagocyte NADPH oxidase core complex/cytochrome b558 complex, composed of CYBB (heavy chain (beta)) and CYBA (light chain (alpha)). Component of the phagocyte NADPH oxidase complex composed of an obligatory core heterodimer formed by the membrane proteins CYBA and CYBB and the cytosolic regulatory subunits NCF1/p47-phox, NCF2/p67-phox, NCF4/p40-phox and the small GTPase RAC1 or RAC2. Interacts with NCF1 (phosphorylated form). Interacts with NCF2; the interaction is enhanced in the presence of GBP7. Interacts with RAC2. Interacts with RAC1. Interacts with calprotectin (S100A8/9). Interacts with NRROS; the interaction is direct and impairs formation of a stable NADPH oxidase complex. Interacts with CYBC1; CYBC1 may act as a chaperone stabilizing Cytochrome b-245 heterodimer. The CYBA:CYBB complex interacts with GBP7. Requires FAD as cofactor. Glycosylated. Post-translationally, phosphorylated on Ser and Thr residues by PKC during neutrophils activation. Phosphorylation enhances the NADPH oxidase activity and stimulates its interaction with RAC2, NCF2/p67-phox, and NCF1/p47-phox. In terms of processing, undergoes 'Lys-48'-linked polyubiquitination, likely by RNF145, triggering endoplasmic reticulum-associated degradation.

The protein resides in the cell membrane. The catalysed reaction is NADPH + 2 O2 = 2 superoxide + NADP(+) + H(+). Its function is as follows. Catalytic subunit of the phagocyte NADPH oxidase complex that mediates the transfer of electrons from cytosolic NADPH to O2 to produce the superoxide anion (O2(-)). In the activated complex, electrons are first transferred from NADPH to flavin adenine dinucleotide (FAD) and subsequently transferred via two heme molecules to molecular oxygen, producing superoxide through an outer-sphere reaction. Activation of the NADPH oxidase complex is initiated by the assembly of cytosolic subunits of the NADPH oxidase complex with the core NADPH oxidase complex to form a complex at the plasma membrane or phagosomal membrane. This activation process is initiated by phosphorylation dependent binding of the cytosolic NCF1/p47-phox subunit to the C-terminus of CYBA/p22-phox. NADPH oxidase complex assembly is impaired through interaction with NRROS. In Mus musculus (Mouse), this protein is NADPH oxidase 2.